Reading from the N-terminus, the 473-residue chain is Photosystem II CP43 reaction center protein (473 aa).

A propeptide spanning residues methionine 1 to glutamate 14 is cleaved from the precursor. Threonine 15 carries the post-translational modification N-acetylthreonine. Phosphothreonine is present on threonine 15. 5 consecutive transmembrane segments (helical) span residues leucine 69–alanine 93, leucine 134–asparagine 155, lysine 178–threonine 200, lysine 255–serine 275, and tryptophan 291–alanine 312. Residue glutamate 367 coordinates [CaMn4O5] cluster. A helical transmembrane segment spans residues arginine 447–proline 471.

The protein belongs to the PsbB/PsbC family. PsbC subfamily. PSII is composed of 1 copy each of membrane proteins PsbA, PsbB, PsbC, PsbD, PsbE, PsbF, PsbH, PsbI, PsbJ, PsbK, PsbL, PsbM, PsbT, PsbX, PsbY, PsbZ, Psb30/Ycf12, at least 3 peripheral proteins of the oxygen-evolving complex and a large number of cofactors. It forms dimeric complexes. Binds multiple chlorophylls and provides some of the ligands for the Ca-4Mn-5O cluster of the oxygen-evolving complex. It may also provide a ligand for a Cl- that is required for oxygen evolution. PSII binds additional chlorophylls, carotenoids and specific lipids. is required as a cofactor.

The protein localises to the plastid. The protein resides in the chloroplast thylakoid membrane. One of the components of the core complex of photosystem II (PSII). It binds chlorophyll and helps catalyze the primary light-induced photochemical processes of PSII. PSII is a light-driven water:plastoquinone oxidoreductase, using light energy to abstract electrons from H(2)O, generating O(2) and a proton gradient subsequently used for ATP formation. The protein is Photosystem II CP43 reaction center protein of Pinus thunbergii (Japanese black pine).